Consider the following 556-residue polypeptide: Glucomannan 4-beta-mannosyltransferase 7 (556 aa).

Residues 58–78 (VVVPVFKFLVLLCLVMSVMFF) traverse the membrane as a helical segment. Residue Asp-158 is part of the active site. 2 residues coordinate substrate: Asp-217 and Asp-219. The active site involves Asp-311. Helical transmembrane passes span 390 to 410 (IVAH…TVLF), 426 to 448 (LITL…WVLF), 502 to 522 (LLEL…IVYG), and 526 to 546 (LYVY…GFVG).

It belongs to the glycosyltransferase 2 family. Plant cellulose synthase-like A subfamily. Ubiquitous.

The protein localises to the golgi apparatus membrane. The catalysed reaction is GDP-mannose + (glucomannan)n = GDP + (glucomannan)n+1.. In terms of biological role, probable mannan synthase which consists of a 4-beta-mannosyltransferase activity on mannan using GDP-mannose. The beta-1,4-mannan product is the backbone for galactomannan synthesis by galactomannan galactosyltransferase. Galactomannan is a noncellulosic polysaccharides of plant cell wall. Required for synthesis of a cell wall polysaccharide essential for pollen tube growth, for cell wall structure, or for signaling during plant embryo development. The chain is Glucomannan 4-beta-mannosyltransferase 7 from Arabidopsis thaliana (Mouse-ear cress).